The following is a 404-amino-acid chain: Probable tRNA sulfurtransferase (404 aa).

Positions 61-166 (EAVSERLKDV…SGYSYIMCDE (106 aa)) constitute a THUMP domain. Residues 184 to 185 (LL), 209 to 210 (HF), arginine 266, glycine 288, and glutamine 297 contribute to the ATP site.

The protein belongs to the ThiI family.

The protein resides in the cytoplasm. It carries out the reaction [ThiI sulfur-carrier protein]-S-sulfanyl-L-cysteine + a uridine in tRNA + 2 reduced [2Fe-2S]-[ferredoxin] + ATP + H(+) = [ThiI sulfur-carrier protein]-L-cysteine + a 4-thiouridine in tRNA + 2 oxidized [2Fe-2S]-[ferredoxin] + AMP + diphosphate. It catalyses the reaction [ThiS sulfur-carrier protein]-C-terminal Gly-Gly-AMP + S-sulfanyl-L-cysteinyl-[cysteine desulfurase] + AH2 = [ThiS sulfur-carrier protein]-C-terminal-Gly-aminoethanethioate + L-cysteinyl-[cysteine desulfurase] + A + AMP + 2 H(+). The protein operates within cofactor biosynthesis; thiamine diphosphate biosynthesis. Catalyzes the ATP-dependent transfer of a sulfur to tRNA to produce 4-thiouridine in position 8 of tRNAs, which functions as a near-UV photosensor. Also catalyzes the transfer of sulfur to the sulfur carrier protein ThiS, forming ThiS-thiocarboxylate. This is a step in the synthesis of thiazole, in the thiamine biosynthesis pathway. The sulfur is donated as persulfide by IscS. This chain is Probable tRNA sulfurtransferase, found in Bacillus cereus (strain AH187).